The sequence spans 109 residues: Nucleoid-associated protein Spro_1136 (109 aa).

Disordered stretches follow at residues 1–21 and 90–109; these read MFGK…QEKM and EKMA…KMPF. Low complexity predominate over residues 11–21; that stretch reads MKQAQQMQEKM.

This sequence belongs to the YbaB/EbfC family. As to quaternary structure, homodimer.

Its subcellular location is the cytoplasm. The protein localises to the nucleoid. Functionally, binds to DNA and alters its conformation. May be involved in regulation of gene expression, nucleoid organization and DNA protection. The polypeptide is Nucleoid-associated protein Spro_1136 (Serratia proteamaculans (strain 568)).